A 425-amino-acid polypeptide reads, in one-letter code: COP9 signalosome complex subunit 1 (425 aa).

The PCI domain maps to 219–379; that stretch reads ASSGVPPEIY…KSKALQTLEN (161 aa).

Belongs to the CSN1 family. In terms of assembly, component of the COP9 signalosome (CSN) complex.

It localises to the cytoplasm. Its subcellular location is the nucleus. Functionally, component of the COP9 signalosome (CSN) complex that acts as an regulator of the ubiquitin (Ubl) conjugation pathway by mediating the deneddylation of the cullin subunit of SCF-type E3 ubiquitin-protein ligase complexes. The CSN complex is involved in the regulation of the circadian clock through its control of the stability of the SCF(FWD-1) complex. The sequence is that of COP9 signalosome complex subunit 1 (csn-1) from Neurospora crassa (strain ATCC 24698 / 74-OR23-1A / CBS 708.71 / DSM 1257 / FGSC 987).